Consider the following 347-residue polypeptide: S-adenosylmethionine:tRNA ribosyltransferase-isomerase (347 aa).

It belongs to the QueA family. In terms of assembly, monomer.

It localises to the cytoplasm. The enzyme catalyses 7-aminomethyl-7-carbaguanosine(34) in tRNA + S-adenosyl-L-methionine = epoxyqueuosine(34) in tRNA + adenine + L-methionine + 2 H(+). The protein operates within tRNA modification; tRNA-queuosine biosynthesis. Its function is as follows. Transfers and isomerizes the ribose moiety from AdoMet to the 7-aminomethyl group of 7-deazaguanine (preQ1-tRNA) to give epoxyqueuosine (oQ-tRNA). This Bordetella bronchiseptica (strain ATCC BAA-588 / NCTC 13252 / RB50) (Alcaligenes bronchisepticus) protein is S-adenosylmethionine:tRNA ribosyltransferase-isomerase.